Here is a 392-residue protein sequence, read N- to C-terminus: Chalcone synthase B (392 aa).

The active site involves C167.

This sequence belongs to the thiolase-like superfamily. Chalcone/stilbene synthases family. Expressed at low level in seedlings after illumination with UV light. No expression in flowers or tissue culture.

It catalyses the reaction (E)-4-coumaroyl-CoA + 3 malonyl-CoA + 3 H(+) = 2',4,4',6'-tetrahydroxychalcone + 3 CO2 + 4 CoA. It participates in secondary metabolite biosynthesis; flavonoid biosynthesis. In terms of biological role, the primary product of this enzyme is 4,2',4',6'-tetrahydroxychalcone (also termed naringenin-chalcone or chalcone) which can under specific conditions spontaneously isomerize into naringenin. The chain is Chalcone synthase B (CHSB) from Petunia hybrida (Petunia).